The primary structure comprises 188 residues: Pyridoxal 5'-phosphate synthase subunit PdxT (188 aa).

46 to 48 (GES) is an L-glutamine binding site. Cys-78 functions as the Nucleophile in the catalytic mechanism. L-glutamine-binding positions include Arg-105 and 134–135 (IR). Active-site charge relay system residues include His-170 and Glu-172.

This sequence belongs to the glutaminase PdxT/SNO family. In terms of assembly, in the presence of PdxS, forms a dodecamer of heterodimers. Only shows activity in the heterodimer.

The catalysed reaction is aldehydo-D-ribose 5-phosphate + D-glyceraldehyde 3-phosphate + L-glutamine = pyridoxal 5'-phosphate + L-glutamate + phosphate + 3 H2O + H(+). The enzyme catalyses L-glutamine + H2O = L-glutamate + NH4(+). It functions in the pathway cofactor biosynthesis; pyridoxal 5'-phosphate biosynthesis. Catalyzes the hydrolysis of glutamine to glutamate and ammonia as part of the biosynthesis of pyridoxal 5'-phosphate. The resulting ammonia molecule is channeled to the active site of PdxS. The sequence is that of Pyridoxal 5'-phosphate synthase subunit PdxT from Thermotoga petrophila (strain ATCC BAA-488 / DSM 13995 / JCM 10881 / RKU-1).